We begin with the raw amino-acid sequence, 250 residues long: Small ribosomal subunit protein uS2 (250 aa).

Belongs to the universal ribosomal protein uS2 family.

This chain is Small ribosomal subunit protein uS2, found in Marinobacter nauticus (strain ATCC 700491 / DSM 11845 / VT8) (Marinobacter aquaeolei).